Consider the following 240-residue polypeptide: MSAPLSLFVTGTDTEIGKTFVSTALLHGFARAGLRAAAMKPIAAGAYQRDGVWRNEDADQLDAAANVALPATIRTPFLLKAAAAPHIAAAREGVALDIDTIVGAHRRACERADVVVVEGVGGFRVPLAGTRDTADLAVALGLPVVLVVGVRLGCISHALLTADAIAARGLAIAGWVANRVDAAMRFADDNVDTLRAWLEREHGAPLLGDIAHMSPPSPEAASRSLDVNRLLGALRETAPR.

Position 15–20 (15–20 (EIGKTF)) interacts with ATP. Threonine 19 is a Mg(2+) binding site. Lysine 40 is a catalytic residue. ATP is bound by residues aspartate 57, 118–121 (EGVG), and 178–179 (NR). The Mg(2+) site is built by aspartate 57 and glutamate 118.

This sequence belongs to the dethiobiotin synthetase family. Homodimer. Requires Mg(2+) as cofactor.

It localises to the cytoplasm. The catalysed reaction is (7R,8S)-7,8-diammoniononanoate + CO2 + ATP = (4R,5S)-dethiobiotin + ADP + phosphate + 3 H(+). Its pathway is cofactor biosynthesis; biotin biosynthesis; biotin from 7,8-diaminononanoate: step 1/2. In terms of biological role, catalyzes a mechanistically unusual reaction, the ATP-dependent insertion of CO2 between the N7 and N8 nitrogen atoms of 7,8-diaminopelargonic acid (DAPA, also called 7,8-diammoniononanoate) to form a ureido ring. The protein is ATP-dependent dethiobiotin synthetase BioD of Burkholderia thailandensis (strain ATCC 700388 / DSM 13276 / CCUG 48851 / CIP 106301 / E264).